A 104-amino-acid chain; its full sequence is Pole-localizer protein TmaR (104 aa).

2 coiled-coil regions span residues 7–34 and 76–96; these read IVNQARRKNKLKRELLDNEKKVRDNRKR and SAEISKARRDISRRIRELTEE.

Belongs to the pole-localizer TmaR family.

It localises to the cytoplasm. Pole-localizer protein involved in the regulation of several cellular processes. This is Pole-localizer protein TmaR from Vibrio atlanticus (strain LGP32) (Vibrio splendidus (strain Mel32)).